A 311-amino-acid polypeptide reads, in one-letter code: Aspartate carbamoyltransferase catalytic subunit (311 aa).

Carbamoyl phosphate contacts are provided by Arg-58 and Thr-59. Residue Lys-86 coordinates L-aspartate. Carbamoyl phosphate is bound by residues Arg-108, His-136, and Gln-139. 2 residues coordinate L-aspartate: Arg-169 and Arg-223. Residues Gly-264 and Pro-265 each contribute to the carbamoyl phosphate site.

It belongs to the aspartate/ornithine carbamoyltransferase superfamily. ATCase family. In terms of assembly, heterododecamer (2C3:3R2) of six catalytic PyrB chains organized as two trimers (C3), and six regulatory PyrI chains organized as three dimers (R2).

The enzyme catalyses carbamoyl phosphate + L-aspartate = N-carbamoyl-L-aspartate + phosphate + H(+). The protein operates within pyrimidine metabolism; UMP biosynthesis via de novo pathway; (S)-dihydroorotate from bicarbonate: step 2/3. Catalyzes the condensation of carbamoyl phosphate and aspartate to form carbamoyl aspartate and inorganic phosphate, the committed step in the de novo pyrimidine nucleotide biosynthesis pathway. This chain is Aspartate carbamoyltransferase catalytic subunit, found in Acidiphilium cryptum (strain JF-5).